The sequence spans 239 residues: Uridylate kinase (239 aa).

Residue 13–16 (KLSG) coordinates ATP. Residue Gly-55 coordinates UMP. The ATP site is built by Gly-56 and Arg-60. UMP contacts are provided by residues Asp-75 and 136-143 (TGNPFFTT). 3 residues coordinate ATP: Thr-163, Tyr-169, and Asp-172.

The protein belongs to the UMP kinase family. In terms of assembly, homohexamer.

The protein localises to the cytoplasm. The catalysed reaction is UMP + ATP = UDP + ADP. The protein operates within pyrimidine metabolism; CTP biosynthesis via de novo pathway; UDP from UMP (UMPK route): step 1/1. Inhibited by UTP. Catalyzes the reversible phosphorylation of UMP to UDP. The protein is Uridylate kinase of Chromobacterium violaceum (strain ATCC 12472 / DSM 30191 / JCM 1249 / CCUG 213 / NBRC 12614 / NCIMB 9131 / NCTC 9757 / MK).